A 391-amino-acid chain; its full sequence is Ferrochelatase (391 aa).

The Fe cation site is built by histidine 196 and glutamate 281.

This sequence belongs to the ferrochelatase family.

It is found in the cytoplasm. The catalysed reaction is heme b + 2 H(+) = protoporphyrin IX + Fe(2+). It participates in porphyrin-containing compound metabolism; protoheme biosynthesis; protoheme from protoporphyrin-IX: step 1/1. In terms of biological role, catalyzes the ferrous insertion into protoporphyrin IX. The sequence is that of Ferrochelatase from Synechococcus sp. (strain WH7803).